The primary structure comprises 112 residues: Ciliary microtubule inner protein 3 (112 aa).

Positions 1-34 are disordered; that stretch reads MCKDSQKPSVPSHGPKTPSCKGVKAPHSSRPRAW.

This sequence belongs to the CIMIP3-like family.

The protein localises to the cytoplasm. The protein resides in the cytoskeleton. It is found in the flagellum axoneme. This is Ciliary microtubule inner protein 3 from Homo sapiens (Human).